We begin with the raw amino-acid sequence, 422 residues long: UDP-N-acetylglucosamine 1-carboxyvinyltransferase (422 aa).

Residue 22–23 (KN) participates in phosphoenolpyruvate binding. A UDP-N-acetyl-alpha-D-glucosamine-binding site is contributed by R93. C117 serves as the catalytic Proton donor. Residue C117 is modified to 2-(S-cysteinyl)pyruvic acid O-phosphothioketal. Residues 122–126 (RPVDQ), D305, and I327 contribute to the UDP-N-acetyl-alpha-D-glucosamine site.

Belongs to the EPSP synthase family. MurA subfamily.

The protein resides in the cytoplasm. It carries out the reaction phosphoenolpyruvate + UDP-N-acetyl-alpha-D-glucosamine = UDP-N-acetyl-3-O-(1-carboxyvinyl)-alpha-D-glucosamine + phosphate. It functions in the pathway cell wall biogenesis; peptidoglycan biosynthesis. Its function is as follows. Cell wall formation. Adds enolpyruvyl to UDP-N-acetylglucosamine. The polypeptide is UDP-N-acetylglucosamine 1-carboxyvinyltransferase (Bordetella bronchiseptica (strain ATCC BAA-588 / NCTC 13252 / RB50) (Alcaligenes bronchisepticus)).